Consider the following 453-residue polypeptide: MIKYFGTDGIRGVVGKTPITADFFFKLGAVIGKILYFYDVKKIIIGRDTRLSSYMLEEALQFGLSLVGVSVISVGVLPTPAISYFTKLFNLEVGVVISASHNQFRDNGIKFFVKNGVKLSAKFERRIEKQLNKTIILKQFVDLGHISYKRALQQKYINFCISTLPNNFRLNNFKIVLDCANGSTYELAPIIFRELGANVVLMSAAPNGLNINDKCGTTDLQEIQRLVLSEKADLGISFDGDGDRVIMIDHFGNSVNGDQILYILAKNYKKNKKLRGGVVGTKMSNGGLSLALSKIGIPFITVNIGDRYIFKKLKEKQWRLGAESSGHVILLDYAPVGDGIITSLQILKIIFDENSTLKSLCSDIHMLPQIIINIKNNIDISFLKNFKIQSVLSKYKDFLGKYSRIMLRLSGTEKCIRIMIEGCCSKKINIFSKMLINVINSVKKSRFSIITMF.

Ser100 acts as the Phosphoserine intermediate in catalysis. Positions 100, 239, 241, and 243 each coordinate Mg(2+). Position 100 is a phosphoserine (Ser100).

This sequence belongs to the phosphohexose mutase family. It depends on Mg(2+) as a cofactor. Post-translationally, activated by phosphorylation.

It carries out the reaction alpha-D-glucosamine 1-phosphate = D-glucosamine 6-phosphate. Functionally, catalyzes the conversion of glucosamine-6-phosphate to glucosamine-1-phosphate. The protein is Phosphoglucosamine mutase of Buchnera aphidicola subsp. Baizongia pistaciae (strain Bp).